The sequence spans 465 residues: Mothers against decapentaplegic homolog 5 (465 aa).

Positions 13–137 (PAVKRLLGWK…YKRVESPVLP (125 aa)) constitute an MH1 domain. Residues Cys-65, Cys-110, Cys-122, and His-127 each contribute to the Zn(2+) site. The tract at residues 163–242 (NEPHMPHNAT…MGQDNSQSMD (80 aa)) is disordered. A compositionally biased stretch (polar residues) spans 173-183 (FPDSFQQPNST). Over residues 198 to 214 (ASSTYPSSPASSGPSSP) the composition is skewed to low complexity. The 195-residue stretch at 271 to 465 (WCSIVYYELN…SPLNPISSVS (195 aa)) folds into the MH2 domain.

This sequence belongs to the dwarfin/SMAD family. May form trimers with the co-SMAD SMAD4.

It localises to the cytoplasm. It is found in the nucleus. Functionally, transcriptional modulator activated by BMP (bone morphogenetic proteins) type 1 receptor kinase. SMAD5 is a receptor-regulated SMAD (R-SMAD). In Gallus gallus (Chicken), this protein is Mothers against decapentaplegic homolog 5 (SMAD5).